Reading from the N-terminus, the 643-residue chain is Transcription elongation factor B polypeptide 3 (643 aa).

Residues 9 to 82 (DVVRHYQRSI…TKWKAMVAKE (74 aa)) form the TFIIS N-terminal domain. Disordered regions lie at residues 86–289 (IAST…MGAN) and 302–351 (SSKK…SKKP). Residues 94–106 (HNEEDSGKTKSSD) are compositionally biased toward basic and acidic residues. Residues 114 to 124 (KGGNSSSGEDL) are compositionally biased toward polar residues. S120 bears the Phosphoserine mark. The span at 127-136 (SKHKSKHAKS) shows a compositional bias: basic residues. Composition is skewed to basic and acidic residues over residues 164 to 198 (HDKSKDRDKDREGQKEAKEHKEKKSNGEHKSKDSS) and 207 to 237 (SKSESHKSEHTKSKHEKDKTSHSELKEVKDK). Basic residues predominate over residues 238-255 (SSKHKSSSSKSSKRSHSP). The segment covering 302–336 (SSKKSSSNSKSKFVAKPTAAPSSSALSAPTTAGSS) has biased composition (low complexity). The activation domain stretch occupies residues 413-571 (AQGISSKTMR…PPRSVQRKQE (159 aa)). An interacting with Elongin BC complex region spans residues 439–448 (SLFDLCTRVL).

It localises to the nucleus. SIII, also known as elongin, is a general transcription elongation factor that increases the RNA polymerase II transcription elongation past template-encoded arresting sites. Subunit A is transcriptionally active and its transcription activity is strongly enhanced by binding to the dimeric complex of the SIII regulatory subunits B and C (elongin BC complex). May play an important role in metamorphosis. The sequence is that of Transcription elongation factor B polypeptide 3 (EloA) from Drosophila melanogaster (Fruit fly).